We begin with the raw amino-acid sequence, 95 residues long: Small ribosomal subunit protein bS18 (95 aa).

The protein belongs to the bacterial ribosomal protein bS18 family. As to quaternary structure, part of the 30S ribosomal subunit. Forms a tight heterodimer with protein bS6.

Binds as a heterodimer with protein bS6 to the central domain of the 16S rRNA, where it helps stabilize the platform of the 30S subunit. The chain is Small ribosomal subunit protein bS18 from Rickettsia africae (strain ESF-5).